A 583-amino-acid chain; its full sequence is CD166 antigen (583 aa).

An N-terminal signal peptide occupies residues 1-27 (MASKAAPSCRLVFCLLISATVLRPGLG). Ig-like V-type domains lie at 28–120 (WYTV…TEDD) and 125–234 (PTVV…KTVY). The Extracellular portion of the chain corresponds to 28 to 527 (WYTVNSAYGD…NKEKVNDQAK (500 aa)). 2 disulfides stabilise this stretch: Cys43-Cys113 and Cys157-Cys220. 9 N-linked (GlcNAc...) asparagine glycosylation sites follow: Asn91, Asn95, Asn167, Asn265, Asn306, Asn361, Asn457, Asn480, and Asn499. 3 consecutive Ig-like C2-type domains span residues 245 to 328 (PTEQ…AAIT), 333 to 409 (DLSL…ESLT), and 416 to 501 (PQIK…LNVS). Disulfide bonds link Cys270/Cys313, Cys354/Cys392, and Cys435/Cys485. Residues 528-549 (LIVGIVVGLLLAALVAGVVYWL) form a helical membrane-spanning segment. Residues 550–583 (YMKKSKTASKHVNKDLGNMEENKKLEENNHKTEA) are Cytoplasmic-facing. Positions 562-583 (NKDLGNMEENKKLEENNHKTEA) are disordered. Basic and acidic residues predominate over residues 569 to 583 (EENKKLEENNHKTEA).

As to quaternary structure, homodimer. Interacts (via extracellular domain) with CD6 (via extracellular domain). Homodimerization and interaction with CD6 involve the same region and cannot occur simultaneously. The affinity for CD6 is much higher than the affinity for self-association. Interacts (via glycosylated extracellular domain) with LGALS1 and LGALS3. Interaction with LGALS1 or LGALS3 inhibits interaction with CD6. Post-translationally, glycosylated. In terms of tissue distribution, constitutively expressed in the autonomic nervous system. Sympathetic and parasympathetic nerve fibers but not myelinated nerve fibers in the spinal nerve.

The protein localises to the cell membrane. Its subcellular location is the cell projection. It is found in the axon. It localises to the dendrite. In terms of biological role, cell adhesion molecule that mediates both heterotypic cell-cell contacts via its interaction with CD6, as well as homotypic cell-cell contacts. Promotes T-cell activation and proliferation via its interactions with CD6. Contributes to the formation and maturation of the immunological synapse via its interactions with CD6. Mediates homotypic interactions with cells that express ALCAM. Mediates attachment of dendritic cells onto endothelial cells via homotypic interaction. Inhibits endothelial cell migration and promotes endothelial tube formation via homotypic interactions. Required for normal organization of the lymph vessel network. Required for normal hematopoietic stem cell engraftment in the bone marrow. Plays a role in hematopoiesis; required for normal numbers of hematopoietic stem cells in bone marrow. Promotes in vitro osteoblast proliferation and differentiation. Promotes neurite extension, axon growth and axon guidance; axons grow preferentially on surfaces that contain ALCAM. Mediates outgrowth and pathfinding for retinal ganglion cell axons. This is CD166 antigen (ALCAM) from Bos taurus (Bovine).